The following is a 78-amino-acid chain: Major outer membrane lipoprotein Lpp (78 aa).

The N-terminal stretch at 1–19 is a signal peptide; the sequence is MKAKIVLGAVILASGLLAG. Residue Cys20 is the site of N-palmitoyl cysteine attachment. Cys20 carries the S-diacylglycerol cysteine lipid modification. 2 repeats span residues 25-35 and 39-49; these read NAQLDQISSDV and NTQVQQLSSDV. Residues 28–62 adopt a coiled-coil conformation; the sequence is LDQISSDVNRLNTQVQQLSSDVQSANAQAKAAYEA. Lys78 is modified (N6-murein peptidoglycan lysine).

This sequence belongs to the Lpp family. Homotrimer.

It localises to the cell outer membrane. It is found in the secreted. Its subcellular location is the cell wall. In terms of biological role, a highly abundant outer membrane lipoprotein that controls the distance between the inner and outer membranes. The only protein known to be covalently linked to the peptidoglycan network (PGN). Also non-covalently binds the PGN. The link between the cell outer membrane and PGN contributes to maintenance of the structural and functional integrity of the cell envelope, and maintains the correct distance between the PGN and the outer membrane. The sequence is that of Major outer membrane lipoprotein Lpp from Proteus mirabilis.